Consider the following 314-residue polypeptide: tRNA dimethylallyltransferase (314 aa).

12-19 (GPTAAGKS) provides a ligand contact to ATP. Residue 14–19 (TAAGKS) participates in substrate binding. Interaction with substrate tRNA regions lie at residues 37 to 40 (DSAT), 161 to 165 (QRIQR), and 245 to 250 (RCVGYR).

Belongs to the IPP transferase family. In terms of assembly, monomer. The cofactor is Mg(2+).

It carries out the reaction adenosine(37) in tRNA + dimethylallyl diphosphate = N(6)-dimethylallyladenosine(37) in tRNA + diphosphate. Functionally, catalyzes the transfer of a dimethylallyl group onto the adenine at position 37 in tRNAs that read codons beginning with uridine, leading to the formation of N6-(dimethylallyl)adenosine (i(6)A). The chain is tRNA dimethylallyltransferase from Bordetella petrii (strain ATCC BAA-461 / DSM 12804 / CCUG 43448).